Here is a 301-residue protein sequence, read N- to C-terminus: Probable 2-dehydro-3-deoxy-D-pentonate aldolase YjhH (301 aa).

Catalysis depends on charge relay system residues T46 and Y109. Y135 functions as the Proton donor in the catalytic mechanism. K164 (schiff-base intermediate with substrate) is an active-site residue.

It belongs to the DapA family.

It is found in the cytoplasm. It carries out the reaction 2-dehydro-3-deoxy-D-arabinonate = glycolaldehyde + pyruvate. Its function is as follows. Functions as a 2-dehydro-3-deoxy-D-pentonate aldolase. The polypeptide is Probable 2-dehydro-3-deoxy-D-pentonate aldolase YjhH (yjhH) (Escherichia coli (strain K12)).